We begin with the raw amino-acid sequence, 185 residues long: uncharacterized protein (185 aa).

3 helical membrane passes run 9–29 (LVAAGLVLHIIQWIFILWAFL), 72–92 (VLFFALVLLIYGIVLHAILIV), and 111–131 (FFFIAAGVKLAILNITGIPFL).

Its subcellular location is the cell membrane. This is an uncharacterized protein from Bacillus subtilis (strain 168).